Reading from the N-terminus, the 421-residue chain is Histidine--tRNA ligase (421 aa).

Belongs to the class-II aminoacyl-tRNA synthetase family.

It localises to the cytoplasm. It carries out the reaction tRNA(His) + L-histidine + ATP = L-histidyl-tRNA(His) + AMP + diphosphate + H(+). This chain is Histidine--tRNA ligase, found in Pyrobaculum calidifontis (strain DSM 21063 / JCM 11548 / VA1).